A 151-amino-acid polypeptide reads, in one-letter code: Apolipoprotein A-I (151 aa).

An N-terminal signal peptide occupies residues Met-1–Ala-18. Positions Arg-19 to Gln-24 are excised as a propeptide. Repeat copies occupy residues Leu-67–Gly-88 and Pro-89–Ser-110. The tract at residues Leu-67–Ala-143 is 4 X approximate tandem repeats. Met-109 is modified (methionine sulfoxide). Residues Lys-111–Gln-121 form a 3; half-length repeat. The stretch at Pro-122–Ala-143 is repeat 4.

This sequence belongs to the apolipoprotein A1/A4/E family. Homodimer. Interacts with APOA1BP and CLU. Component of a sperm activating protein complex (SPAP), consisting of APOA1, an immunoglobulin heavy chain, an immunoglobulin light chain and albumin. Interacts with NDRG1. Interacts with SCGB3A2. Interacts with NAXE and YJEFN3. Glycosylated. Post-translationally, palmitoylated. In terms of processing, phosphorylation sites are present in the extracellular medium. As to expression, major protein of plasma HDL, also found in chylomicrons.

The protein localises to the secreted. In terms of biological role, participates in the reverse transport of cholesterol from tissues to the liver for excretion by promoting cholesterol efflux from tissues and by acting as a cofactor for the lecithin cholesterol acyltransferase (LCAT). As part of the SPAP complex, activates spermatozoa motility. The sequence is that of Apolipoprotein A-I (APOA1) from Panthera tigris altaica (Siberian tiger).